Consider the following 110-residue polypeptide: MELLRIAVLFAFTAVAEIVGCYLPWLVLRQGKPFWLLLPAAASLALFAWLLTLHPAAAGRTYAAYGGVYIAVALVWLRLVDGVALTRWDVGGAAIALTGMAVIALQPQAN.

Helical transmembrane passes span 8 to 28 (VLFA…WLVL), 33 to 53 (PFWL…LLTL), 65 to 85 (YGGV…GVAL), and 88 to 108 (WDVG…LQPQ).

The protein belongs to the UPF0060 family.

It localises to the cell inner membrane. The polypeptide is UPF0060 membrane protein Rpic_4131 (Ralstonia pickettii (strain 12J)).